Consider the following 338-residue polypeptide: Nicotinate-nucleotide--dimethylbenzimidazole phosphoribosyltransferase (338 aa).

Catalysis depends on E306, which acts as the Proton acceptor.

The protein belongs to the CobT family.

The catalysed reaction is 5,6-dimethylbenzimidazole + nicotinate beta-D-ribonucleotide = alpha-ribazole 5'-phosphate + nicotinate + H(+). It functions in the pathway nucleoside biosynthesis; alpha-ribazole biosynthesis; alpha-ribazole from 5,6-dimethylbenzimidazole: step 1/2. Its function is as follows. Catalyzes the synthesis of alpha-ribazole-5'-phosphate from nicotinate mononucleotide (NAMN) and 5,6-dimethylbenzimidazole (DMB). The sequence is that of Nicotinate-nucleotide--dimethylbenzimidazole phosphoribosyltransferase from Cereibacter sphaeroides (strain ATCC 17023 / DSM 158 / JCM 6121 / CCUG 31486 / LMG 2827 / NBRC 12203 / NCIMB 8253 / ATH 2.4.1.) (Rhodobacter sphaeroides).